A 574-amino-acid polypeptide reads, in one-letter code: G protein-coupled receptor kinase 4 (574 aa).

Methionine 1 is modified (N-acetylmethionine). The N-terminal stretch occupies residues 1–153 (MELENFVANN…ECAGIVCKYL (153 aa)). The RGS domain occupies 51–171 (DFSSLCDKQP…QESTYFNRFL (121 aa)). One can recognise a Protein kinase domain in the interval 186–448 (FRQYRVLGKG…VSAVKQHPIF (263 aa)). ATP contacts are provided by residues 192 to 200 (LGKGGFGEV) and lysine 215. Catalysis depends on aspartate 311, which acts as the Proton acceptor. The AGC-kinase C-terminal domain maps to 449-514 (KDINFSRLEA…GSVTIPWQNE (66 aa)). Serine 484 bears the Phosphoserine mark.

This sequence belongs to the protein kinase superfamily. AGC Ser/Thr protein kinase family. GPRK subfamily. As to quaternary structure, interacts with DRD3. Palmitoylated.

The protein localises to the cytoplasm. It localises to the cell cortex. It catalyses the reaction [G-protein-coupled receptor] + ATP = [G-protein-coupled receptor]-phosphate + ADP + H(+). Its activity is regulated as follows. Inhibited by heparin. In terms of biological role, specifically phosphorylates the activated forms of G protein-coupled receptors. The protein is G protein-coupled receptor kinase 4 (Grk4) of Mus musculus (Mouse).